Reading from the N-terminus, the 164-residue chain is Glutaredoxin-2, mitochondrial (164 aa).

Residues 1 to 19 constitute a mitochondrion transit peptide; it reads MIWRRAALAGTRLVWSRSG. Serine 20 carries the phosphoserine modification. Residues 57–157 form the Glutaredoxin domain; sequence VNQIQETISD…PLVHQCYLKK (101 aa). Cysteine 68 lines the [2Fe-2S] cluster pocket. Lysine 74 provides a ligand contact to glutathione. Cysteine 77 carries the post-translational modification S-glutathionyl cysteine; alternate. A disulfide bond links cysteine 77 and cysteine 80. 2 residues coordinate glutathione: glutamine 109 and valine 121. Residue cysteine 153 participates in [2Fe-2S] cluster binding.

The protein belongs to the glutaredoxin family. As to quaternary structure, monomer; active form. Homodimer; inactive form. The homodimer is probably linked by 1 2Fe-2S cluster. Widely expressed. Expressed in brain, heart, skeletal muscle, colon, thymus, spleen, kidney, liver, small intestine, placenta and lung. Not expressed in peripheral blood leukocytes.

It localises to the mitochondrion. The protein localises to the nucleus. With respect to regulation, the 2Fe-2S present in the homodimer leads to inactivation of the enzyme. The 2Fe-2S may serve as a redox sensor: the presence of one-electron oxidants or reductants leading to the loss of the 2Fe-2S cluster, subsequent monomerization and activation of the enzyme. Unlike other glutaredoxins, it is not inhibited by oxidation of structural Cys residues. In terms of biological role, glutathione-dependent oxidoreductase that facilitates the maintenance of mitochondrial redox homeostasis upon induction of apoptosis by oxidative stress. Involved in response to hydrogen peroxide and regulation of apoptosis caused by oxidative stress. Acts as a very efficient catalyst of monothiol reactions because of its high affinity for protein glutathione-mixed disulfides. Can receive electrons not only from glutathione (GSH), but also from thioredoxin reductase supporting both monothiol and dithiol reactions. Efficiently catalyzes both glutathionylation and deglutathionylation of mitochondrial complex I, which in turn regulates the superoxide production by the complex. Overexpression decreases the susceptibility to apoptosis and prevents loss of cardiolipin and cytochrome c release. The polypeptide is Glutaredoxin-2, mitochondrial (GLRX2) (Homo sapiens (Human)).